The sequence spans 351 residues: Short-chain dehydrogenase sdnK (351 aa).

6 residues coordinate NADP(+): isoleucine 46, threonine 66, glutamate 98, tyrosine 224, lysine 228, and threonine 268. Tyrosine 224 (proton donor) is an active-site residue. Lysine 228 functions as the Lowers pKa of active site Tyr in the catalytic mechanism.

It belongs to the short-chain dehydrogenases/reductases (SDR) family.

It participates in antibiotic biosynthesis. In terms of biological role, short-chain dehydrogenase; part of the gene cluster that mediates the biosynthesis of sordarin and hypoxysordarin, glycoside antibiotics with a unique tetracyclic diterpene aglycone structure. First, the geranylgeranyl diphosphate synthase sdnC constructs GGDP from farnesyl diphosphate and isopentenyl diphosphate. The diterpene cyclase sdnA then catalyzes the cyclization of GGDP to afford cycloaraneosene. Cycloaraneosene is then hydroxylated four times by the putative cytochrome P450 monooxygenases sdnB, sdnE, sdnF and sdnH to give a hydroxylated cycloaraneosene derivative such as cycloaraneosene-8,9,13,19-tetraol. Although the order of the hydroxylations is unclear, at least C8, C9 and C13 of the cycloaraneosene skeleton are hydroxylated before the sordaricin formation. Dehydration of the 13-hydroxy group of the hydroxylated cycloaraneosene derivative might be catalyzed by an unassigned hypothetical protein such as sdnG and sdnP to construct the cyclopentadiene moiety. The FAD-dependent oxidoreductase sdnN is proposed to catalyze the oxidation at C9 of the hydroxylated cycloaraneosene derivative and also catalyze the Baeyer-Villiger oxidation to give the lactone intermediate. The presumed lactone intermediate would be hydrolyzed to give an acrolein moiety and a carboxylate moiety. Then, [4+2]cycloaddition would occur between the acrolein moiety and the cyclopentadiene moiety to give sordaricin. SdnN might also be involved in the [4+2]cycloaddition after the hypothesized oxidation to accommodate the oxidized product and prompt the [4+2]cycloaddition. GDP-6-deoxy-D-altrose may be biosynthesized from GDP-D-mannose by the putative GDP-mannose-4,6-dehydratase sdnI and the short-chain dehydrogenase sdnK. The glycosyltransferase sdnJ catalyzes the attachment of 6-deoxy-D-altrose onto the 19-hydroxy group of sordaricin to give 4'-O-demethylsordarin. The methyltransferase sdnD would complete the biosynthesis of sordarin. Sordarin can be further modified into hypoxysordarin. The unique acyl chain at the 3'-hydroxy group of hypoxysordarin would be constructed by an iterative type I PKS sdnO and the trans-acting polyketide methyltransferase sdnL. SdnL would be responsible for the introduction of an alpha-methyl group of the polyketide chain. Alternatively, the beta-lactamase-like protein sdnR might be responsible for the cleavage and transfer of the polyketide chain from the PKS sdnO to sordarin. Two putative cytochrome P450 monooxygenases, sdnQ and sdnT, might catalyze the epoxidations of the polyketide chain to complete the biosynthesis of hypoxysordarin. Transcriptional regulators sdnM and sdnS are presumably encoded for the transcriptional regulation of the expression of the sdn gene cluster. This is Short-chain dehydrogenase sdnK from Sordaria araneosa (Pleurage araneosa).